We begin with the raw amino-acid sequence, 213 residues long: Kynurenine formamidase (213 aa).

Trp20 provides a ligand contact to substrate. Residues His50, His54, and Asp56 each contribute to the Zn(2+) site. The active-site Proton donor/acceptor is the His60. 2 residues coordinate Zn(2+): His161 and Glu173.

The protein belongs to the Cyclase 1 superfamily. KynB family. As to quaternary structure, homodimer. It depends on Zn(2+) as a cofactor.

It carries out the reaction N-formyl-L-kynurenine + H2O = L-kynurenine + formate + H(+). It participates in amino-acid degradation; L-tryptophan degradation via kynurenine pathway; L-kynurenine from L-tryptophan: step 2/2. Its function is as follows. Catalyzes the hydrolysis of N-formyl-L-kynurenine to L-kynurenine, the second step in the kynurenine pathway of tryptophan degradation. The chain is Kynurenine formamidase from Pseudomonas paraeruginosa (strain DSM 24068 / PA7) (Pseudomonas aeruginosa (strain PA7)).